The primary structure comprises 365 residues: Alanine racemase (365 aa).

The active-site Proton acceptor; specific for D-alanine is the lysine 32. Lysine 32 carries the N6-(pyridoxal phosphate)lysine modification. Arginine 128 contacts substrate. The active-site Proton acceptor; specific for L-alanine is tyrosine 257. Methionine 305 contributes to the substrate binding site.

The protein belongs to the alanine racemase family. The cofactor is pyridoxal 5'-phosphate.

The enzyme catalyses L-alanine = D-alanine. The protein operates within amino-acid biosynthesis; D-alanine biosynthesis; D-alanine from L-alanine: step 1/1. Its function is as follows. Catalyzes the interconversion of L-alanine and D-alanine. May also act on other amino acids. The protein is Alanine racemase (alr) of Francisella tularensis subsp. holarctica (strain FTNF002-00 / FTA).